The following is a 449-amino-acid chain: tRNA-2-methylthio-N(6)-dimethylallyladenosine synthase (449 aa).

Residues 2 to 119 (KGLFIRTYGC…LPEMIARASR (118 aa)) enclose the MTTase N-terminal domain. 6 residues coordinate [4Fe-4S] cluster: Cys-11, Cys-47, Cys-82, Cys-157, Cys-161, and Cys-164. Positions 143–378 (EADGPAAFVS…QALLREQQTE (236 aa)) constitute a Radical SAM core domain. One can recognise a TRAM domain in the interval 381-443 (ASQIGKTLPV…LNSLTGELVR (63 aa)).

It belongs to the methylthiotransferase family. MiaB subfamily. In terms of assembly, monomer. The cofactor is [4Fe-4S] cluster.

It localises to the cytoplasm. It carries out the reaction N(6)-dimethylallyladenosine(37) in tRNA + (sulfur carrier)-SH + AH2 + 2 S-adenosyl-L-methionine = 2-methylsulfanyl-N(6)-dimethylallyladenosine(37) in tRNA + (sulfur carrier)-H + 5'-deoxyadenosine + L-methionine + A + S-adenosyl-L-homocysteine + 2 H(+). In terms of biological role, catalyzes the methylthiolation of N6-(dimethylallyl)adenosine (i(6)A), leading to the formation of 2-methylthio-N6-(dimethylallyl)adenosine (ms(2)i(6)A) at position 37 in tRNAs that read codons beginning with uridine. In Hyphomonas neptunium (strain ATCC 15444), this protein is tRNA-2-methylthio-N(6)-dimethylallyladenosine synthase.